Reading from the N-terminus, the 158-residue chain is Flagellar assembly factor FliW (158 aa).

Belongs to the FliW family. As to quaternary structure, interacts with translational regulator CsrA and flagellin(s).

It is found in the cytoplasm. Functionally, acts as an anti-CsrA protein, binds CsrA and prevents it from repressing translation of its target genes, one of which is flagellin. Binds to flagellin and participates in the assembly of the flagellum. The protein is Flagellar assembly factor FliW of Moorella thermoacetica (strain ATCC 39073 / JCM 9320).